A 536-amino-acid chain; its full sequence is MALGAAYHHYLQLAGDHGTATHALLLGVLIFLVIRLVSARRTGTTSANKRKQQQRLPLPPWPPGKLPIIGHLHLIGAETHISIRDLDAKHGRNGLLLLRIGAVPTLFVSSPSAADAVLRTQDHIFASRPPWMAAEIIRYGPSDVAFVPYGEYGRQGRKLLTTHMLSTKKVQSFRHGRQEEVRLVMDKIRAAATAAPPAAVDLSDLLSGYTNDVVSRAVLGASHRNQGRNRLFSELTEINVSLLAGFNLEDYFPPNMAMADVLLRLVSVKARRLNQRWNDVFDELIQEHVQSRPSGESEESEADFIHVLLSIQQEYGLTTDNLKAILVDMFEAGIETSYLTLEYGMAELINNRHVMEKLQTEVRTTMGSPDGKKLDMLAEEDLGSMPYLKATIKETLRLHPPAPFLLPHYSTADSEIDGYFVPAGTRVLVHAWALGRDRTTWEKPEEFMPERFVQEPGAVDVHMKGKDLRFIPFGSGRRICPGMNFGFATMEVMLANLMYHFDWEVPGSGAGVSMEESFGLTLRRKEKLLLVPRIAS.

The helical transmembrane segment at 18–34 threads the bilayer; it reads GTATHALLLGVLIFLVI. Position 480 (cysteine 480) interacts with heme.

It belongs to the cytochrome P450 family. The cofactor is heme.

Its subcellular location is the membrane. The enzyme catalyses indolin-2-one + reduced [NADPH--hemoprotein reductase] + O2 = 3-hydroxyindolin-2-one + oxidized [NADPH--hemoprotein reductase] + H2O + H(+). It functions in the pathway secondary metabolite biosynthesis; 2,4-dihydroxy-1,4-benzoxazin-3-one biosynthesis; 2,4-dihydroxy-1,4-benzoxazin-3-one from indoleglycerol phosphate: step 3/5. Functionally, catalyzes the conversion of indolin-2-one to 3-hydroxyindolin-2-one. The polypeptide is Indolin-2-one monooxygenase (CYP71C2) (Zea mays (Maize)).